Reading from the N-terminus, the 84-residue chain is Anaphase-promoting complex subunit 11 (84 aa).

The segment at 34 to 77 (CPDCKLPGDDCPLIWGACNHAFHLHCILKWVNSQTSQAHCPMCR) adopts an RING-type; atypical zinc-finger fold.

This sequence belongs to the RING-box family. In terms of assembly, part of the APC/C complex composed of at least 10 subunits. Interacts with APC2.

It is found in the cytoplasm. Its subcellular location is the nucleus. It participates in protein modification; protein ubiquitination. Component of the anaphase promoting complex/cyclosome (APC/C), a cell cycle-regulated E3 ubiquitin-protein ligase complex that controls progression through mitosis and the G1 phase of the cell cycle. The APC/C complex controls several key steps in the cell cycle by mediating ubiquitination and subsequent degradation of target proteins such as cyclins. The APC/C complex is required for the female gametophyte development and is involved in several aspect of development by controlling cell division and cell elongation. Involved in the control of endoreduplication. May recruit the E2 ubiquitin-conjugating enzymes to the complex. The chain is Anaphase-promoting complex subunit 11 from Arabidopsis thaliana (Mouse-ear cress).